The primary structure comprises 369 residues: MIFLIGNSTSNYTVCFPIFILEDTRALKFPYSMLQALEFVLTFVSFYYVIKCCYVAIHIKSFHRNLTVLLIILMIQWFEGLLSNILIKPYETGFWPLGEHNTQLKQWWTKDYSKMIQVPNLSTFPNFFLGGFLKWHYILSMITTLLVMSIERSFACYFLTDYEKKSRNGLFFMLVVGQTSTNLVMGYLFFFNAAHFAVGFSIILSTNIIAMGIFTYVKHVNRQVNRAIEDFSNPSLYCLPARFQVRENVRCFQMITKVIHAGLFLILTACFVNLFMYLELTPGLDPLLNLIFESAINLNPVVIVPTLLGSVNAWRNFTFSSGVCLGFKAQVRLKIIKVSSVSIGNDGAKSDRTRKETDAYFDQLNSAWI.

The next 8 helical transmembrane spans lie at methionine 1–leucine 21, phenylalanine 39–isoleucine 59, threonine 67–isoleucine 87, phenylalanine 127–valine 147, glycine 169–phenylalanine 191, histidine 195–valine 217, valine 258–leucine 278, and isoleucine 291–valine 311.

Belongs to the nematode receptor-like protein sre family.

It localises to the membrane. This chain is Serpentine receptor class epsilon-45 (sre-45), found in Caenorhabditis elegans.